The primary structure comprises 359 residues: 3-dehydroquinate synthase (359 aa).

NAD(+)-binding positions include 69 to 74 (DGEAYK), 103 to 107 (GVIGD), 127 to 128 (TT), Lys140, Lys149, and 167 to 170 (CLKT). The Zn(2+) site is built by Glu182, His245, and His262.

It belongs to the sugar phosphate cyclases superfamily. Dehydroquinate synthase family. The cofactor is Co(2+). It depends on Zn(2+) as a cofactor. NAD(+) serves as cofactor.

It is found in the cytoplasm. The enzyme catalyses 7-phospho-2-dehydro-3-deoxy-D-arabino-heptonate = 3-dehydroquinate + phosphate. Its pathway is metabolic intermediate biosynthesis; chorismate biosynthesis; chorismate from D-erythrose 4-phosphate and phosphoenolpyruvate: step 2/7. Its function is as follows. Catalyzes the conversion of 3-deoxy-D-arabino-heptulosonate 7-phosphate (DAHP) to dehydroquinate (DHQ). The sequence is that of 3-dehydroquinate synthase from Aeromonas salmonicida (strain A449).